Consider the following 429-residue polypeptide: 4-hydroxy-3-methylbut-2-en-1-yl diphosphate synthase (flavodoxin) (429 aa).

4 residues coordinate [4Fe-4S] cluster: Cys317, Cys320, Cys363, and Glu370.

It belongs to the IspG family. Requires [4Fe-4S] cluster as cofactor.

The enzyme catalyses (2E)-4-hydroxy-3-methylbut-2-enyl diphosphate + oxidized [flavodoxin] + H2O + 2 H(+) = 2-C-methyl-D-erythritol 2,4-cyclic diphosphate + reduced [flavodoxin]. It participates in isoprenoid biosynthesis; isopentenyl diphosphate biosynthesis via DXP pathway; isopentenyl diphosphate from 1-deoxy-D-xylulose 5-phosphate: step 5/6. Functionally, converts 2C-methyl-D-erythritol 2,4-cyclodiphosphate (ME-2,4cPP) into 1-hydroxy-2-methyl-2-(E)-butenyl 4-diphosphate. The sequence is that of 4-hydroxy-3-methylbut-2-en-1-yl diphosphate synthase (flavodoxin) from Deinococcus radiodurans (strain ATCC 13939 / DSM 20539 / JCM 16871 / CCUG 27074 / LMG 4051 / NBRC 15346 / NCIMB 9279 / VKM B-1422 / R1).